The primary structure comprises 388 residues: Chalcone synthase (388 aa).

Cys164 is a catalytic residue.

This sequence belongs to the thiolase-like superfamily. Chalcone/stilbene synthases family.

It catalyses the reaction (E)-4-coumaroyl-CoA + 3 malonyl-CoA + 3 H(+) = 2',4,4',6'-tetrahydroxychalcone + 3 CO2 + 4 CoA. It participates in secondary metabolite biosynthesis; flavonoid biosynthesis. In terms of biological role, the primary product of this enzyme is 4,2',4',6'-tetrahydroxychalcone (also termed naringenin-chalcone or chalcone) which can under specific conditions spontaneously isomerize into naringenin. The protein is Chalcone synthase (CHS) of Vigna unguiculata (Cowpea).